We begin with the raw amino-acid sequence, 501 residues long: Bifunctional purine biosynthesis protein PurH (501 aa).

An MGS-like domain is found at 1 to 144; sequence MKKRALISVF…KNFKDVVVLS (144 aa).

Belongs to the PurH family.

It carries out the reaction (6R)-10-formyltetrahydrofolate + 5-amino-1-(5-phospho-beta-D-ribosyl)imidazole-4-carboxamide = 5-formamido-1-(5-phospho-D-ribosyl)imidazole-4-carboxamide + (6S)-5,6,7,8-tetrahydrofolate. The catalysed reaction is IMP + H2O = 5-formamido-1-(5-phospho-D-ribosyl)imidazole-4-carboxamide. The protein operates within purine metabolism; IMP biosynthesis via de novo pathway; 5-formamido-1-(5-phospho-D-ribosyl)imidazole-4-carboxamide from 5-amino-1-(5-phospho-D-ribosyl)imidazole-4-carboxamide (10-formyl THF route): step 1/1. Its pathway is purine metabolism; IMP biosynthesis via de novo pathway; IMP from 5-formamido-1-(5-phospho-D-ribosyl)imidazole-4-carboxamide: step 1/1. This chain is Bifunctional purine biosynthesis protein PurH, found in Clostridium perfringens (strain ATCC 13124 / DSM 756 / JCM 1290 / NCIMB 6125 / NCTC 8237 / Type A).